Reading from the N-terminus, the 149-residue chain is Calmodulin (149 aa).

Ala-2 bears the N-acetylalanine mark. 4 consecutive EF-hand domains span residues 8-43, 44-79, 81-116, and 117-149; these read EQIAEFKEAFSLFDKDGDGSITTKELGTVMRSLGQN, PTEAELQDMINEVDADGNGTIDFPEFLNLMARKMKD, DSEEELKEAFKVFDKDQNGYISAADWRHVMTNLGEK, and LTDEEVDEMIREADVDGDGQVNYEEFVKMMMAK. Ca(2+) contacts are provided by Asp-21, Asp-23, Asp-25, Ser-27, Glu-32, Asp-57, Asp-59, Asn-61, Thr-63, Glu-68, Asp-94, Asp-96, Asn-98, Tyr-100, and Asp-105. At Lys-116 the chain carries N6,N6,N6-trimethyllysine. Residues Asp-130, Asp-132, Asp-134, Gln-136, and Glu-141 each contribute to the Ca(2+) site.

It belongs to the calmodulin family.

Functionally, calmodulin mediates the control of a large number of enzymes, ion channels and other proteins by Ca(2+). Among the enzymes to be stimulated by the calmodulin-Ca(2+) complex are a number of protein kinases and phosphatases. The chain is Calmodulin from Mougeotia scalaris (Green alga).